Here is a 475-residue protein sequence, read N- to C-terminus: Tetratricopeptide repeat protein 29 (475 aa).

TPR repeat units follow at residues 92-131, 136-173, 182-215, 234-267, 274-307, 314-347, and 354-387; these read DALR…EDAE, FEDV…AQLI, AEAH…TQGR, LRTY…AKEG, GEAS…STEL, GRAY…ARNN, and VRAS…TVEL. The segment at 436-475 is disordered; that stretch reads DIEPDPVTEEFRGSTVETVSQNSEHLEELSRFPGDQKNET. Positions 459 to 475 are enriched in basic and acidic residues; sequence EHLEELSRFPGDQKNET.

It localises to the cytoplasm. It is found in the cytoskeleton. Its subcellular location is the flagellum axoneme. In terms of biological role, axonemal protein which is implicated in axonemal and/or peri-axonemal structure assembly and regulates flagellum assembly and beating and therefore sperm motility. This Macaca fascicularis (Crab-eating macaque) protein is Tetratricopeptide repeat protein 29 (TTC29).